Here is a 583-residue protein sequence, read N- to C-terminus: MHYCNNGNISNWKVFRRLWPIINPFKIGLIIASITLIINAVSDSLMLALLKPLLDEGFGKANRSIFMWMPLVLMGLMIMRGMSGFASTYCISWVSGKVVMHIRRLLFNHIMNMPVSFFIEQSTATLMSRITYDADQVASSSSGALITIIREGASVVGLCIMMFYYSWQLSLVLILIMPIISIIIKLVSNKFKDIGKKIQNSMSQLVNSVEQMLKGHKEVLIFGGQHLEQNRFNYLSNRMRQYTMKMVQTSSVFEPLIQFVASLALACVLYIASIPSVIEMLSAGTITVIFSSMIALMKPLKSLTNVSAQFQRGMVACQTLFTILDLKTEKNIGKFSVKRVKGHIIFDNVTFFYPETNTPSLCNINFNIESGKTIALVGRSGSGKSTIVNLLTRFYDVYQGRILLDGLNLNDYTLTSLREQVSVVTQNVYLFNDTIANNIAYARTRFYSRASIEEAAKMAYAMGFISKMKNGFDTIVGENGILLSNGQRQRIAIARALLRNCPILILDEATSSLDTESECIIYKSINILKKNRTSLIIAHRLSTIENADEILVVERGSIVERGIHVDLLNHKGVYSQLYKFQFS.

7 helical membrane passes run 18 to 38, 65 to 85, 105 to 127, 143 to 163, 167 to 187, 252 to 272, and 277 to 297; these read LWPI…TLII, IFMW…MSGF, LLFN…ATLM, GALI…IMMF, WQLS…IKLV, VFEP…LYIA, and VIEM…IALM. Residues 30–312 form the ABC transmembrane type-1 domain; the sequence is IIASITLIIN…LTNVSAQFQR (283 aa). An ABC transporter domain is found at 344 to 580; the sequence is IIFDNVTFFY…KGVYSQLYKF (237 aa). 378 to 385 lines the ATP pocket; that stretch reads GRSGSGKS.

It belongs to the ABC transporter superfamily. Lipid exporter (TC 3.A.1.106) family. Homodimer.

It is found in the cell inner membrane. It carries out the reaction ATP + H2O + lipid A-core oligosaccharideSide 1 = ADP + phosphate + lipid A-core oligosaccharideSide 2.. In terms of biological role, involved in lipopolysaccharide (LPS) biosynthesis. Translocates lipid A-core from the inner to the outer leaflet of the inner membrane. Transmembrane domains (TMD) form a pore in the inner membrane and the ATP-binding domain (NBD) is responsible for energy generation. The polypeptide is ATP-dependent lipid A-core flippase (Blochmanniella floridana).